A 656-amino-acid polypeptide reads, in one-letter code: uncharacterized protein (656 aa).

Transmembrane regions (helical) follow at residues glutamine 7–leucine 27, leucine 40–leucine 60, and alanine 210–isoleucine 230. Positions threonine 231 to glutamine 280 constitute an HAMP domain. Positions glutamate 289–asparagine 359 constitute a PAS domain. Residues asparagine 424 to lysine 654 form the Histidine kinase domain. Histidine 427 is subject to Phosphohistidine; by autocatalysis.

It is found in the plastid. It localises to the chloroplast membrane. It carries out the reaction ATP + protein L-histidine = ADP + protein N-phospho-L-histidine.. This is an uncharacterized protein from Porphyra purpurea (Red seaweed).